Consider the following 201-residue polypeptide: Dephospho-CoA kinase (201 aa).

One can recognise a DPCK domain in the interval isoleucine 4–aspartate 201. Alanine 12–threonine 17 serves as a coordination point for ATP.

Belongs to the CoaE family.

It is found in the cytoplasm. The catalysed reaction is 3'-dephospho-CoA + ATP = ADP + CoA + H(+). The protein operates within cofactor biosynthesis; coenzyme A biosynthesis; CoA from (R)-pantothenate: step 5/5. Catalyzes the phosphorylation of the 3'-hydroxyl group of dephosphocoenzyme A to form coenzyme A. The sequence is that of Dephospho-CoA kinase from Streptococcus pneumoniae serotype 4 (strain ATCC BAA-334 / TIGR4).